The primary structure comprises 155 residues: Ribosomal RNA large subunit methyltransferase H (155 aa).

Residues L72, G103, and 122-127 (LSALTL) each bind S-adenosyl-L-methionine.

It belongs to the RNA methyltransferase RlmH family. In terms of assembly, homodimer.

Its subcellular location is the cytoplasm. It catalyses the reaction pseudouridine(1915) in 23S rRNA + S-adenosyl-L-methionine = N(3)-methylpseudouridine(1915) in 23S rRNA + S-adenosyl-L-homocysteine + H(+). Its function is as follows. Specifically methylates the pseudouridine at position 1915 (m3Psi1915) in 23S rRNA. This Salmonella choleraesuis (strain SC-B67) protein is Ribosomal RNA large subunit methyltransferase H.